The sequence spans 154 residues: 17 kDa surface antigen (154 aa).

Positions 1-19 (MKLLSKIMIIALAASTLQA) are cleaved as a signal peptide. Cysteine 20 is lipidated: N-palmitoyl cysteine. Cysteine 20 carries S-diacylglycerol cysteine lipidation.

Belongs to the rickettsiale 17 kDa surface antigen family.

The protein localises to the cell outer membrane. The polypeptide is 17 kDa surface antigen (omp) (Rickettsia amblyommatis (Rickettsia amblyommii)).